The following is a 529-amino-acid chain: Cytokinin dehydrogenase 4 (529 aa).

An N-terminal signal peptide occupies residues 1–27 (MRGAMKPSIVHCLKLLMLLALGGVTMH). One can recognise an FAD-binding PCMH-type domain in the interval 63–244 (CSLLPAAVLH…TRARIALEPA (182 aa)). Residues A99, G101, and G103 each contribute to the FAD site. H104 carries the pros-8alpha-FAD histidine modification. Residues S105, Q109, D168, T173, S179, V183, and I234 each coordinate FAD. 3 N-linked (GlcNAc...) asparagine glycosylation sites follow: N285, N419, and N425. FAD-binding residues include Y479 and Q517.

This sequence belongs to the oxygen-dependent FAD-linked oxidoreductase family. Monomer. FAD serves as cofactor. Expressed in inflorescence meristems.

Its subcellular location is the secreted. The protein resides in the extracellular space. The enzyme catalyses N(6)-dimethylallyladenine + A + H2O = 3-methyl-2-butenal + adenine + AH2. Catalyzes the oxidation of cytokinins, a family of N(6)-substituted adenine derivatives that are plant hormones, where the substituent is an isopentenyl group. This chain is Cytokinin dehydrogenase 4 (CKX4), found in Oryza sativa subsp. japonica (Rice).